The following is a 111-amino-acid chain: Small ribosomal subunit protein bS16 (111 aa).

This sequence belongs to the bacterial ribosomal protein bS16 family.

The polypeptide is Small ribosomal subunit protein bS16 (Rickettsia bellii (strain OSU 85-389)).